The sequence spans 77 residues: MAEVLEKVTKIIVDRLGVEESKVTLEASFKEDLGADSLDVVELVMELEDEFGVEISDGDAENINTVGDAVKYIEANA.

The region spanning 2 to 77 (AEVLEKVTKI…DAVKYIEANA (76 aa)) is the Carrier domain. Ser-37 is subject to O-(pantetheine 4'-phosphoryl)serine.

This sequence belongs to the acyl carrier protein (ACP) family. In terms of processing, 4'-phosphopantetheine is transferred from CoA to a specific serine of apo-ACP by AcpS. This modification is essential for activity because fatty acids are bound in thioester linkage to the sulfhydryl of the prosthetic group.

It is found in the cytoplasm. Its pathway is lipid metabolism; fatty acid biosynthesis. Carrier of the growing fatty acid chain in fatty acid biosynthesis. In Listeria innocua serovar 6a (strain ATCC BAA-680 / CLIP 11262), this protein is Acyl carrier protein.